We begin with the raw amino-acid sequence, 299 residues long: MDPEGLQFLLPPASLAALANSWLQEDCPGLNFASLVTGSAPAQAVLWAKSPGVLAGRPFFDAIFTQLNCQVSWLLPEGSKLVPVVKVAEVRGPAHHLLLGERVALNTLARCSGIASAAATAVEVATSTGWAGHVAGTRKTTPGFRLVEKYGLLVGGAECHRYDLGGLVMVKDNHVVAAGSMEKAVLKARQAAGFPLKVEVECSSLKEALQAAEAGADLVMLDNFKPEELHPTAATLKAKFPNVSVEASGGVTLDNLPQFCGTNIDVISLGMLTQAAPALDFSLKLYAEGDIPVPHARRS.

An important for hexamer formation region spans residues 8–12; it reads FLLPP. Quinolinate contacts are provided by residues arginine 102, 138 to 139, 160 to 161, lysine 171, glutamate 201, aspartate 222, 248 to 250, and glycine 270; these read RK, HR, and SGG.

It belongs to the NadC/ModD family. Hexamer formed by 3 homodimers.

The catalysed reaction is nicotinate beta-D-ribonucleotide + CO2 + diphosphate = quinolinate + 5-phospho-alpha-D-ribose 1-diphosphate + 2 H(+). The protein operates within cofactor biosynthesis; NAD(+) biosynthesis; nicotinate D-ribonucleotide from quinolinate: step 1/1. In terms of biological role, involved in the catabolism of quinolinic acid (QA). This chain is Nicotinate-nucleotide pyrophosphorylase [carboxylating] (Qprt), found in Rattus norvegicus (Rat).